We begin with the raw amino-acid sequence, 118 residues long: Basic phospholipase A2 CM-III (118 aa).

7 disulfides stabilise this stretch: Cys11–Cys70, Cys26–Cys117, Cys28–Cys44, Cys43–Cys98, Cys50–Cys91, Cys59–Cys84, and Cys77–Cys89. Residues Tyr27, Gly29, and Gly31 each coordinate Ca(2+). The active site involves His47. Asp48 serves as a coordination point for Ca(2+). Positions Glu52–Lys69 match the Coagulation factor Xa binding motif motif. The active site involves Asp92.

It belongs to the phospholipase A2 family. Group I subfamily. D49 sub-subfamily. It depends on Ca(2+) as a cofactor. As to expression, expressed by the venom gland.

Its subcellular location is the secreted. The enzyme catalyses a 1,2-diacyl-sn-glycero-3-phosphocholine + H2O = a 1-acyl-sn-glycero-3-phosphocholine + a fatty acid + H(+). Its function is as follows. Snake venom phospholipase A2 (PLA2) that shows several activities. It shows strong anticoagulant activity, probably by binding to coagulation factor Xa (F10) and inhibiting the formation of the prothrombinase complex, shows direct hemolytic action, causes neuromuscular blockade with a gradual contracture and a decreased sensitivity to ACh and KCl, abolishes twitches evoked by indirect stimulation earlier than those by direct stimulation (in the mouse phrenic nerve-diaphragm preparation), and causes myonecrosis when injected intramuscularly. PLA2 catalyzes the calcium-dependent hydrolysis of the 2-acyl groups in 3-sn-phosphoglycerides. The protein is Basic phospholipase A2 CM-III of Naja mossambica (Mozambique spitting cobra).